Reading from the N-terminus, the 678-residue chain is AAC-rich mRNA clone AAC4 protein (678 aa).

Residues 55 to 73 are compositionally biased toward low complexity; sequence NNNNNNNNNNNNNNNNNNN. The segment at 55–75 is disordered; sequence NNNNNNNNNNNNNNNNNNNTS. Residues 243–263 traverse the membrane as a helical segment; it reads IIPIYHEIILVLCNWLVVAFY. The span at 318-346 shows a compositional bias: low complexity; the sequence is NNNNNNNNNNNNNNNNNNNNNNNNKTNNN. The interval 318–347 is disordered; it reads NNNNNNNNNNNNNNNNNNNNNNNNKTNNNQ.

It localises to the membrane. This Dictyostelium discoideum (Social amoeba) protein is AAC-rich mRNA clone AAC4 protein (AAC4).